Reading from the N-terminus, the 256-residue chain is MLLIDKTVIVTGASRGIGRAAARECARQGARVVIGHSGSDEGRAGALSLAEEIAAFGGTAIAVGADAADLDSGEKLVAAAVEAFGSVDVLVNNAGICPFHSFLDMPRELYLKTVGTNLNGAYFTVQAAARRMKEQGRGGAIIAVSSISALVGGAMQTHYTPTKAGLLSLMQSCAIALGPYGIRCNAVLPGTIATDINKEDLSDLEKRERMTSRVPLGRLGEPDDLAGPIVFLASDMARYVTGASLLVDGGLFVNLQ.

NADP(+) contacts are provided by Gly12, Ser14, Arg15, Ile17, Ser37, Asp66, Ala67, and Asn93. The active-site Proton donor is Ser146. Residues Ser146, Ser148, Gln156, and Tyr159 each contribute to the beta-L-rhamnose site. NADP(+) contacts are provided by Tyr159 and Lys163. Catalysis depends on Tyr159, which acts as the Proton acceptor. Lys163 functions as the Lowers pKa of active site Tyr in the catalytic mechanism. Thr191 is a binding site for beta-L-rhamnose. Ile192 contacts NADP(+). Asn197 contacts beta-L-rhamnose.

This sequence belongs to the short-chain dehydrogenases/reductases (SDR) family.

The catalysed reaction is L-rhamnofuranose + NAD(+) = L-rhamnono-1,4-lactone + NADH + H(+). It carries out the reaction L-rhamnofuranose + NADP(+) = L-rhamnono-1,4-lactone + NADPH + H(+). The protein operates within carbohydrate degradation; L-rhamnose degradation. NAD(P)-dependent dehydrogenase that catalyzes the oxidation of L-rhamnose to L-rhamnono-1,4-lactone. Also shows high activity with L-lyxose and low activity with L-mannose and L-fucose. Can utilize either NAD(+) or NADP(+), with a strong preference for NADP(+). Catalyzes the first step in an alternative pathway for rhamnose utilization that does not involve phosphorylated intermediates. The sequence is that of L-rhamnose 1-dehydrogenase (NAD(P)(+)) from Azotobacter vinelandii (strain DJ / ATCC BAA-1303).